Consider the following 205-residue polypeptide: High frequency lysogenization protein HflD homolog (205 aa).

It belongs to the HflD family.

It localises to the cytoplasm. The protein localises to the cell inner membrane. The sequence is that of High frequency lysogenization protein HflD homolog from Hahella chejuensis (strain KCTC 2396).